The following is a 137-amino-acid chain: MGVLAAAARCLVRGADRMSKWTSKRGPRSFRGRKGRGAKGIGFLTSGWRFVQIKEMVPEFVVPDLTGFKLKPYVSYLAPESEETPLTAAQLFSEAVAPAIEKDFKDGTFDPDNLEKYGFEPTQEGKLFQLYPRNFLR.

The transit peptide at 1–13 directs the protein to the mitochondrion; it reads MGVLAAAARCLVR.

It belongs to the mitochondrion-specific ribosomal protein mL41 family. Component of the mitochondrial large ribosomal subunit (mt-LSU). Mature mammalian 55S mitochondrial ribosomes consist of a small (28S) and a large (39S) subunit. The 28S small subunit contains a 12S ribosomal RNA (12S mt-rRNA) and 30 different proteins. The 39S large subunit contains a 16S rRNA (16S mt-rRNA), a copy of mitochondrial valine transfer RNA (mt-tRNA(Val)), which plays an integral structural role, and 52 different proteins. Interacts with BCL2. In terms of tissue distribution, present in kidney, liver, thymus and testis, and at lower level in brain and spleen (at protein level).

The protein localises to the mitochondrion. Component of the mitochondrial ribosome large subunit. Also involved in apoptosis and cell cycle. Enhances p53/TP53 stability, thereby contributing to p53/TP53-induced apoptosis in response to growth-inhibitory condition. Enhances p53/TP53 translocation to the mitochondria. Has the ability to arrest the cell cycle at the G1 phase, possibly by stabilizing the CDKN1A and CDKN1B (p27Kip1) proteins. The chain is Large ribosomal subunit protein mL41 (MRPL41) from Homo sapiens (Human).